We begin with the raw amino-acid sequence, 113 residues long: Cytochrome c oxidase subunit 7A2-like, mitochondrial (113 aa).

A mitochondrion-targeting transit peptide spans 1 to 54; sequence MYYKFSSFTQKLAGAWASEAYTPQGLKPVSTEAPPIIFATPTKLTSSVTAYDYS. N6-acetyllysine is present on Lys-68. A helical transmembrane segment spans residues 81–106; sequence PDQMLYRTTMALTLGGTIYCLIALYM.

This sequence belongs to the cytochrome c oxidase VIIa family. As to quaternary structure, interacts with the mitochondrial respiratory complexes III (CIII) and IV (CIV), promoting their association.

The protein resides in the mitochondrion inner membrane. It functions in the pathway energy metabolism; oxidative phosphorylation. Functionally, assembly factor that mediates the formation of some mitochondrial respiratory supercomplexes (respirasomes), thereby promoting oxidative phosphorylation and energy metabolism. Acts as a molecular adapter that associates with both mitochondrial respiratory complexes III (CIII) and IV (CIV), promoting their association. Mediates the formation of various mitochondrial respiratory supercomplexes, such as MCIII(2)IV(2), composed of two CIII and two CIV, and the CS-respirasome (MCI(1)III(2)IV(2)), composed of one CI, two CIII and two CIV. Not involved in the formation of the canonical respirasome (MCI(1)III(2)IV(1)), composed of one CI, two CIII and one CIV. The formation of different respirasomes is important for cell adaptation to oxygen conditions and prevent metabolic exhaustion: supercomplexes mediated by COX7A2L/SCAF1 are required to maintain oxidative phosphorylation upon low oxygen conditions and promote metabolic rewiring toward glycolysis. The chain is Cytochrome c oxidase subunit 7A2-like, mitochondrial from Mus musculus (Mouse).